The sequence spans 269 residues: UPF0524 protein C3orf70 homolog A (269 aa).

Disordered stretches follow at residues 139–203 and 215–249; these read VQRP…DSGI and DEDS…QDEC. Residues 141–150 are compositionally biased toward pro residues; the sequence is RPPPPTPNPT. Residues 151-164 are compositionally biased toward low complexity; the sequence is HQPQTAAPQPVPQR. Basic and acidic residues predominate over residues 179 to 191; that stretch reads QAKEKISAPKMDH. A compositionally biased stretch (acidic residues) spans 215–233; sequence DEDSCVDDDDEEEEDDELS.

This sequence belongs to the UPF0524 family.

Its function is as follows. Plays a role in neuronal and neurobehavioral development. Required for normal expression of neuronal markers elavl3 and eno2 and neurobehaviors related to circadian rhythm and changes in light-dark conditions. In Danio rerio (Zebrafish), this protein is UPF0524 protein C3orf70 homolog A.